Consider the following 80-residue polypeptide: Putative membrane protein insertion efficiency factor (80 aa).

The segment at 61-80 is disordered; sequence KTGKDPVPDHFSLKRNQEGE. The span at 62–80 shows a compositional bias: basic and acidic residues; the sequence is TGKDPVPDHFSLKRNQEGE.

The protein belongs to the UPF0161 family.

It localises to the cell membrane. Could be involved in insertion of integral membrane proteins into the membrane. This chain is Putative membrane protein insertion efficiency factor, found in Streptococcus pneumoniae serotype 2 (strain D39 / NCTC 7466).